Here is a 381-residue protein sequence, read N- to C-terminus: Protein COS8 (381 aa).

Residues 1 to 42 (MKENEVKDEKSVDVLSFKQLEFQKTVLPQDVFRNELTWFCYE) are Extracellular-facing. The chain crosses the membrane as a helical span at residues 43–63 (IYKSLAFRIWMLLWLPLSVWW). At 64 to 72 (KLSSNWIHP) the chain is on the cytoplasmic side. Residues 73 to 93 (LIVSLLVLFLGPFFVLVICGL) traverse the membrane as a helical segment. The Extracellular segment spans residues 94–237 (SRKRSLSKQL…WILKRIFNLR (144 aa)). The helical transmembrane segment at 238-258 (CLPLFLYYFLIVYTSGNADLI) threads the bilayer. The Cytoplasmic segment spans residues 259–381 (SRFLFPVVMF…QSARNEKPLK (123 aa)).

This sequence belongs to the DUP/COS family.

The protein localises to the membrane. The polypeptide is Protein COS8 (COS8) (Saccharomyces cerevisiae (strain ATCC 204508 / S288c) (Baker's yeast)).